The sequence spans 1620 residues: Probable serine/threonine-protein kinase gdt4 (1620 aa).

The N-terminal stretch at 1–19 is a signal peptide; that stretch reads MKLEQRIFFLICLVINSFS. Over 20 to 891 the chain is Extracellular; the sequence is NCSLLVAPDG…EVIGINEQLN (872 aa). The chain crosses the membrane as a helical span at residues 892–912; it reads ILAIVLPITISLFAAASILAG. The Cytoplasmic segment spans residues 913-1620; the sequence is YLVIKKYKKP…AKRNKKNQNQ (708 aa). Residues 1349–1604 form the Protein kinase domain; the sequence is IVLEKYLSEG…TLIDLLEKLL (256 aa). ATP-binding positions include 1355 to 1363 and Lys-1376; that span reads LSEGSFGVV. Asp-1466 serves as the catalytic Proton acceptor.

The protein in the N-terminal section; belongs to the GDT family. It in the C-terminal section; belongs to the protein kinase superfamily. TKL Ser/Thr protein kinase family.

Its subcellular location is the membrane. The catalysed reaction is L-seryl-[protein] + ATP = O-phospho-L-seryl-[protein] + ADP + H(+). It carries out the reaction L-threonyl-[protein] + ATP = O-phospho-L-threonyl-[protein] + ADP + H(+). This chain is Probable serine/threonine-protein kinase gdt4 (gdt4), found in Dictyostelium discoideum (Social amoeba).